Here is a 62-residue protein sequence, read N- to C-terminus: Photosystem II reaction center protein Z (62 aa).

Residue methionine 1 is modified to N-formylmethionine. Topologically, residues 1–4 (MTIL) are lumenal. The chain crosses the membrane as a helical span at residues 5–25 (FQLALAALVILSFVMVIGVPV). The Cytoplasmic segment spans residues 26–36 (AYASPQDWDRS). Residues 37-58 (KQLIFLGSGLWIALVLVVGVLN) form a helical membrane-spanning segment. The Lumenal segment spans residues 59 to 62 (FFVV).

Belongs to the PsbZ family. PSII is composed of 1 copy each of membrane proteins PsbA, PsbB, PsbC, PsbD, PsbE, PsbF, PsbH, PsbI, PsbJ, PsbK, PsbL, PsbM, PsbT, PsbX, PsbY, PsbZ, Psb30/Ycf12, peripheral proteins PsbO, CyanoQ (PsbQ), PsbU, PsbV and a large number of cofactors. It forms dimeric complexes. Part of a photosystem II (PSII) assembly intermediate complex PSII-I; crystallized from a strain deleted of psbJ, it forms monomeric PSII before addition of the oxygen evolving complex. PSII-I includes 3 assembly factors not found in mature PSII (Psb27, Psb28 and Psb34). PSII binds multiple chlorophylls, carotenoids and specific lipids. is required as a cofactor.

It is found in the cellular thylakoid membrane. May control the interaction of photosystem II (PSII) cores with the light-harvesting antenna, regulates electron flow through the 2 photosystem reaction centers. PSII is a light-driven water plastoquinone oxidoreductase, using light energy to abstract electrons from H(2)O, generating a proton gradient subsequently used for ATP formation. Its function is as follows. May also aid in binding of PsbK, Psb30/Ycf12 and the oxygen-evolving complex to PSII, at least in vitro. The protein is Photosystem II reaction center protein Z of Thermosynechococcus vestitus (strain NIES-2133 / IAM M-273 / BP-1).